The following is a 345-amino-acid chain: DNA-directed RNA polymerase subunit alpha (345 aa).

Residues 1–233 (MVRNWCSLIR…KQLQVFVGLH (233 aa)) are alpha N-terminal domain (alpha-NTD). The alpha C-terminal domain (alpha-CTD) stretch occupies residues 256-345 (LNDILLRHVE…EEMGEIQEEG (90 aa)).

This sequence belongs to the RNA polymerase alpha chain family. In terms of assembly, homodimer. The RNAP catalytic core consists of 2 alpha, 1 beta, 1 beta' and 1 omega subunit. When a sigma factor is associated with the core the holoenzyme is formed, which can initiate transcription.

The catalysed reaction is RNA(n) + a ribonucleoside 5'-triphosphate = RNA(n+1) + diphosphate. Its function is as follows. DNA-dependent RNA polymerase catalyzes the transcription of DNA into RNA using the four ribonucleoside triphosphates as substrates. The polypeptide is DNA-directed RNA polymerase subunit alpha (Syntrophus aciditrophicus (strain SB)).